The following is a 388-amino-acid chain: MRYLTAGESHGPSLTAIIEGIPAGLTLHPADIDHELQRRQGGYGRGARMSIETDRVQISSGVRHGKTTGAPITLTVINKDHQKWLDVMAVGDIEETLKLKRRVKHPRPGHADLVGGIKYHFNDLRDALERSSARETTMRVAVGAVAKRILAELGIDMLHHILIFGGITITIPSKLSFRELQERALHSELSIVNPKQEEEIKTYIDKIKKEGDTIGGIIETIVQGVPAGLGSYVQWDKKLDAKLAQAVLSINAFKGVEFGAGFDMGFQKGSQVMDEITWTPTQGYGRQTNHLGGFEGGMTTGQPLVVKGVMKPIPTLYKPLMSVDIDSHEPYKATVERSDPTALPAAGVIMENVVATVLAKEILETFSSTTMSELQKAFSDYRAYVKQF.

Residues Arg39 and Arg45 each coordinate NADP(+). Residues 130-132, 251-252, Gly296, 311-315, and Arg337 each bind FMN; these read RSS, NA, and KPIPT.

It belongs to the chorismate synthase family. As to quaternary structure, homotetramer. The cofactor is FMNH2.

The enzyme catalyses 5-O-(1-carboxyvinyl)-3-phosphoshikimate = chorismate + phosphate. It functions in the pathway metabolic intermediate biosynthesis; chorismate biosynthesis; chorismate from D-erythrose 4-phosphate and phosphoenolpyruvate: step 7/7. Functionally, catalyzes the anti-1,4-elimination of the C-3 phosphate and the C-6 proR hydrogen from 5-enolpyruvylshikimate-3-phosphate (EPSP) to yield chorismate, which is the branch point compound that serves as the starting substrate for the three terminal pathways of aromatic amino acid biosynthesis. This reaction introduces a second double bond into the aromatic ring system. The chain is Chorismate synthase from Streptococcus pyogenes serotype M1.